We begin with the raw amino-acid sequence, 279 residues long: tRNA-cytidine(32) 2-sulfurtransferase (279 aa).

Positions Ser46–Ser51 match the PP-loop motif motif. [4Fe-4S] cluster-binding residues include Cys121, Cys124, and Cys212.

Belongs to the TtcA family. Homodimer. It depends on Mg(2+) as a cofactor. [4Fe-4S] cluster is required as a cofactor.

The protein localises to the cytoplasm. The catalysed reaction is cytidine(32) in tRNA + S-sulfanyl-L-cysteinyl-[cysteine desulfurase] + AH2 + ATP = 2-thiocytidine(32) in tRNA + L-cysteinyl-[cysteine desulfurase] + A + AMP + diphosphate + H(+). It functions in the pathway tRNA modification. In terms of biological role, catalyzes the ATP-dependent 2-thiolation of cytidine in position 32 of tRNA, to form 2-thiocytidine (s(2)C32). The sulfur atoms are provided by the cysteine/cysteine desulfurase (IscS) system. This chain is tRNA-cytidine(32) 2-sulfurtransferase, found in Marinomonas sp. (strain MWYL1).